The primary structure comprises 459 residues: Cysteine--tRNA ligase (459 aa).

C28 contributes to the Zn(2+) binding site. A 'HIGH' region motif is present at residues 30–40; the sequence is VTVYDLCHIGH. The Zn(2+) site is built by C209, H234, and E238. The 'KMSKS' region motif lies at 266–270; that stretch reads KMSKS. Residue K269 participates in ATP binding.

It belongs to the class-I aminoacyl-tRNA synthetase family. Monomer. Requires Zn(2+) as cofactor.

Its subcellular location is the cytoplasm. It carries out the reaction tRNA(Cys) + L-cysteine + ATP = L-cysteinyl-tRNA(Cys) + AMP + diphosphate. In Histophilus somni (strain 129Pt) (Haemophilus somnus), this protein is Cysteine--tRNA ligase.